A 439-amino-acid polypeptide reads, in one-letter code: DNA primase DnaG (439 aa).

The Toprim domain maps to 169–243; it reads DSIIVVEGRA…DIDYVARAPY (75 aa). The Mg(2+) site is built by Glu-175, Asp-217, and Asp-219.

Belongs to the archaeal DnaG primase family. In terms of assembly, forms a ternary complex with MCM helicase and DNA. Requires Mg(2+) as cofactor.

The enzyme catalyses ssDNA + n NTP = ssDNA/pppN(pN)n-1 hybrid + (n-1) diphosphate.. Its function is as follows. RNA polymerase that catalyzes the synthesis of short RNA molecules used as primers for DNA polymerase during DNA replication. The sequence is that of DNA primase DnaG from Methanococcus maripaludis (strain C7 / ATCC BAA-1331).